Here is a 286-residue protein sequence, read N- to C-terminus: Oxidoreductase clz15 (286 aa).

Belongs to the asaB hydroxylase/desaturase family.

Its pathway is secondary metabolite biosynthesis. Its function is as follows. Oxidoreductase; part of the gene cluster that mediates the biosynthesis of squalestatin S1 (SQS1, also known as zaragozic acid A), a heavily oxidized fungal polyketide that offers potent cholesterol lowering activity by targeting squalene synthase (SS). SQS1 is composed of a 2,8-dioxobicyclic[3.2.1]octane-3,4,5-tricarboxyclic acid core that is connected to two lipophilic polyketide arms. These initial steps feature the priming of an unusual benzoic acid starter unit onto the highly reducing polyketide synthase clz14, followed by oxaloacetate extension and product release to generate a tricarboxylic acid containing product. The phenylalanine ammonia lyase (PAL) clz10 and the acyl-CoA ligase clz12 are involved in transforming phenylalanine into benzoyl-CoA. The citrate synthase-like protein clz17 is involved in connecting the C-alpha-carbons of the hexaketide chain and oxaloacetate to afford the tricarboxylic acid unit. The potential hydrolytic enzymes, clz11 and clz13, are in close proximity to pks2 and may participate in product release. On the other side, the tetraketide arm is synthesized by a the squalestatin tetraketide synthase clz2 and enzymatically esterified to the core in the last biosynthetic step, by the acetyltransferase clz6. The biosynthesis of the tetraketide must involve 3 rounds of chain extension. After the first and second rounds methyl-transfer occurs, and in all rounds of extension the ketoreductase and dehydratase are active. The enoyl reductase and C-MeT of clz2 are not active in the final round of extension. The acetyltransferase clz6 appears to have a broad substrate selectivity for its acyl CoA substrate, allowing the in vitro synthesis of novel squalestatins. The biosynthesis of SQS1 requires several oxidative steps likely performed by oxidoreductases clz3, clz15 and clz16. Finally, in support of the identification of the cluster as being responsible for SQS1 production, the cluster contains a gene encoding a putative squalene synthase (SS) clz20, suggesting a likely mechanism for self-resistance. The polypeptide is Oxidoreductase clz15 (Cochliobolus lunatus (Filamentous fungus)).